We begin with the raw amino-acid sequence, 143 residues long: ATP synthase subunit b' (143 aa).

The helical transmembrane segment at 6 to 26 (ATLPLMALQFVVLAFLLNAIF) threads the bilayer.

It belongs to the ATPase B chain family. F-type ATPases have 2 components, F(1) - the catalytic core - and F(0) - the membrane proton channel. F(1) has five subunits: alpha(3), beta(3), gamma(1), delta(1), epsilon(1). F(0) has four main subunits: a(1), b(1), b'(1) and c(10-14). The alpha and beta chains form an alternating ring which encloses part of the gamma chain. F(1) is attached to F(0) by a central stalk formed by the gamma and epsilon chains, while a peripheral stalk is formed by the delta, b and b' chains.

Its subcellular location is the cellular thylakoid membrane. In terms of biological role, f(1)F(0) ATP synthase produces ATP from ADP in the presence of a proton or sodium gradient. F-type ATPases consist of two structural domains, F(1) containing the extramembraneous catalytic core and F(0) containing the membrane proton channel, linked together by a central stalk and a peripheral stalk. During catalysis, ATP synthesis in the catalytic domain of F(1) is coupled via a rotary mechanism of the central stalk subunits to proton translocation. Functionally, component of the F(0) channel, it forms part of the peripheral stalk, linking F(1) to F(0). The b'-subunit is a diverged and duplicated form of b found in plants and photosynthetic bacteria. The chain is ATP synthase subunit b' from Synechocystis sp. (strain ATCC 27184 / PCC 6803 / Kazusa).